We begin with the raw amino-acid sequence, 521 residues long: 56 kDa type-specific antigen (521 aa).

The signal sequence occupies residues M1–A22. A helical transmembrane segment spans residues L64–V86. Residues L386–K415 form a disordered region. Over residues C396–K415 the composition is skewed to basic and acidic residues. Residues T469–A484 form a helical membrane-spanning segment.

It is found in the cell membrane. In terms of biological role, may be an adherent factor for rickettsial adsorption to the host-cell surface and a determinant of virulence of individual rickettsial strain. It is the major outer membrane protein. The polypeptide is 56 kDa type-specific antigen (Orientia tsutsugamushi (Rickettsia tsutsugamushi)).